The primary structure comprises 337 residues: Pyrophosphate--fructose 6-phosphate 1-phosphotransferase (337 aa).

Glycine 10 lines the diphosphate pocket. Aspartate 101 provides a ligand contact to Mg(2+). Residues 124–126, arginine 161, 168–170, glutamate 220, arginine 257, and 263–266 contribute to the substrate site; these read TID, MGR, and HTIR. The active-site Proton acceptor is aspartate 126.

It belongs to the phosphofructokinase type A (PFKA) family. Mixed-substrate PFK group III subfamily. In terms of assembly, homodimer or homotrimer. Mg(2+) serves as cofactor.

Its subcellular location is the cytoplasm. It catalyses the reaction beta-D-fructose 6-phosphate + diphosphate = beta-D-fructose 1,6-bisphosphate + phosphate + H(+). It participates in carbohydrate degradation; glycolysis; D-glyceraldehyde 3-phosphate and glycerone phosphate from D-glucose: step 3/4. Non-allosteric. Its function is as follows. Catalyzes the phosphorylation of D-fructose 6-phosphate, the first committing step of glycolysis. Uses inorganic phosphate (PPi) as phosphoryl donor instead of ATP like common ATP-dependent phosphofructokinases (ATP-PFKs), which renders the reaction reversible, and can thus function both in glycolysis and gluconeogenesis. Consistently, PPi-PFK can replace the enzymes of both the forward (ATP-PFK) and reverse (fructose-bisphosphatase (FBPase)) reactions. The sequence is that of Pyrophosphate--fructose 6-phosphate 1-phosphotransferase from Thermoproteus tenax (strain ATCC 35583 / DSM 2078 / JCM 9277 / NBRC 100435 / Kra 1).